We begin with the raw amino-acid sequence, 639 residues long: Phosphatidylinositol 3,4,5-trisphosphate 3-phosphatase cnrN (639 aa).

The 171-residue stretch at 20–190 (FKSKEMDLDL…NYFKEIVSGS (171 aa)) folds into the Phosphatase tensin-type domain. The Phosphocysteine intermediate role is filled by C129. In terms of domain architecture, C2 tensin-type spans 195–350 (EFVLTFRSIE…LQMECRFQNN (156 aa)). Disordered regions lie at residues 243 to 265 (INNDNSESNNNNNNNNNNNNNNN), 395 to 429 (NNILASSAPTPLTTTTTTTTTTTTTSLPSSEHSTP), 451 to 498 (SSSG…SCSS), 519 to 567 (NNNN…RKRK), and 598 to 628 (FTKKINPNNNEENVDQKTLPILKKETNDPSE). 4 stretches are compositionally biased toward low complexity: residues 244–265 (NNDNSESNNNNNNNNNNNNNNN), 395–424 (NNILASSAPTPLTTTTTTTTTTTTTSLPSS), 458–486 (NSSRNSNSNSRGGSSNSSSNRSSTSSRSS), and 519–554 (NNNNNNNNNNNNNNNNNNNNNKNSNNNNNESSSNSN). Positions 598-608 (FTKKINPNNNE) are enriched in polar residues. The segment covering 619 to 628 (LKKETNDPSE) has biased composition (basic and acidic residues).

Mg(2+) is required as a cofactor.

It catalyses the reaction a 1,2-diacyl-sn-glycero-3-phospho-(1D-myo-inositol-3,4,5-trisphosphate) + H2O = a 1,2-diacyl-sn-glycero-3-phospho-(1D-myo-inositol-4,5-bisphosphate) + phosphate. In terms of biological role, protein phosphatase that negatively regulates PI3K-dependent pathways. Regulates cAMP signal transduction to control territory size. During development, a lawn of Dictyostelium cells breaks up into territories where cells aggregate in dendritic streams to form groups of 20'000 cells. The protein is Phosphatidylinositol 3,4,5-trisphosphate 3-phosphatase cnrN (cnrN) of Dictyostelium discoideum (Social amoeba).